The primary structure comprises 224 residues: 7-cyano-7-deazaguanine synthase (224 aa).

10-20 (LSGGLDSATVV) is an ATP binding site. Cysteine 189, cysteine 199, cysteine 202, and cysteine 205 together coordinate Zn(2+).

Belongs to the QueC family. Requires Zn(2+) as cofactor.

The catalysed reaction is 7-carboxy-7-deazaguanine + NH4(+) + ATP = 7-cyano-7-deazaguanine + ADP + phosphate + H2O + H(+). The protein operates within purine metabolism; 7-cyano-7-deazaguanine biosynthesis. Catalyzes the ATP-dependent conversion of 7-carboxy-7-deazaguanine (CDG) to 7-cyano-7-deazaguanine (preQ(0)). The polypeptide is 7-cyano-7-deazaguanine synthase (Ectopseudomonas mendocina (strain ymp) (Pseudomonas mendocina)).